The sequence spans 264 residues: 3-methyl-2-oxobutanoate hydroxymethyltransferase (264 aa).

Positions 42 and 81 each coordinate Mg(2+). 3-methyl-2-oxobutanoate is bound by residues 42 to 43 (DS), D81, and K110. Residue E112 participates in Mg(2+) binding. Residue E179 is the Proton acceptor of the active site.

Belongs to the PanB family. In terms of assembly, homodecamer; pentamer of dimers. Requires Mg(2+) as cofactor.

The protein localises to the cytoplasm. It catalyses the reaction 3-methyl-2-oxobutanoate + (6R)-5,10-methylene-5,6,7,8-tetrahydrofolate + H2O = 2-dehydropantoate + (6S)-5,6,7,8-tetrahydrofolate. It functions in the pathway cofactor biosynthesis; (R)-pantothenate biosynthesis; (R)-pantoate from 3-methyl-2-oxobutanoate: step 1/2. Its function is as follows. Catalyzes the reversible reaction in which hydroxymethyl group from 5,10-methylenetetrahydrofolate is transferred onto alpha-ketoisovalerate to form ketopantoate. The polypeptide is 3-methyl-2-oxobutanoate hydroxymethyltransferase (Francisella tularensis subsp. tularensis (strain FSC 198)).